A 240-amino-acid chain; its full sequence is Cysteine-rich venom protein catrin (240 aa).

Residues 1 to 19 (MIAFIVLPILAAVLQQSSG) form the signal peptide. In terms of domain architecture, SCP spans 38–166 (VDLHNFLRRS…KYSYFYVCQY (129 aa)). Cystine bridges form between cysteine 75/cysteine 153, cysteine 92/cysteine 167, cysteine 148/cysteine 164, cysteine 186/cysteine 193, cysteine 189/cysteine 198, cysteine 202/cysteine 235, cysteine 211/cysteine 229, and cysteine 220/cysteine 233. The ShKT domain maps to 202–235 (CTKEDKYTNCKSLVQQAGCQDKQMQSDCPAICFC).

Belongs to the CRISP family. Expressed by the venom gland.

The protein localises to the secreted. Functionally, catrin-2 weakly blocks contraction of smooth muscle elicited by high potassium-induced depolarization, but does not block caffeine-stimulated contraction. Catrin-1 has no significant effect. May target voltage-gated calcium channels on smooth muscle. The polypeptide is Cysteine-rich venom protein catrin (Crotalus atrox (Western diamondback rattlesnake)).